A 1155-amino-acid polypeptide reads, in one-letter code: DNA-directed RNA polymerase subunit beta (1155 aa).

Belongs to the RNA polymerase beta chain family. As to quaternary structure, the RNAP catalytic core consists of 2 alpha, 1 beta, 1 beta' and 1 omega subunit. When a sigma factor is associated with the core the holoenzyme is formed, which can initiate transcription.

It carries out the reaction RNA(n) + a ribonucleoside 5'-triphosphate = RNA(n+1) + diphosphate. In terms of biological role, DNA-dependent RNA polymerase catalyzes the transcription of DNA into RNA using the four ribonucleoside triphosphates as substrates. The chain is DNA-directed RNA polymerase subunit beta from Borrelia garinii subsp. bavariensis (strain ATCC BAA-2496 / DSM 23469 / PBi) (Borreliella bavariensis).